Here is a 182-residue protein sequence, read N- to C-terminus: Large ribosomal subunit protein uL6 (182 aa).

This sequence belongs to the universal ribosomal protein uL6 family. Part of the 50S ribosomal subunit.

Functionally, this protein binds to the 23S rRNA, and is important in its secondary structure. It is located near the subunit interface in the base of the L7/L12 stalk, and near the tRNA binding site of the peptidyltransferase center. The protein is Large ribosomal subunit protein uL6 of Dehalococcoides mccartyi (strain ATCC BAA-2266 / KCTC 15142 / 195) (Dehalococcoides ethenogenes (strain 195)).